The sequence spans 456 residues: Arginine biosynthesis bifunctional protein ArgJ, mitochondrial (456 aa).

The substrate site is built by threonine 184, lysine 213, threonine 224, glutamate 311, asparagine 451, and threonine 456. The Nucleophile role is filled by threonine 224.

The protein belongs to the ArgJ family. As to quaternary structure, heterodimer of an alpha and a beta chain. The alpha and beta chains are autoproteolytically processed from a single precursor protein within the mitochondrion.

Its subcellular location is the mitochondrion matrix. The enzyme catalyses N(2)-acetyl-L-ornithine + L-glutamate = N-acetyl-L-glutamate + L-ornithine. It carries out the reaction L-glutamate + acetyl-CoA = N-acetyl-L-glutamate + CoA + H(+). It participates in amino-acid biosynthesis; L-arginine biosynthesis; L-ornithine and N-acetyl-L-glutamate from L-glutamate and N(2)-acetyl-L-ornithine (cyclic): step 1/1. The protein operates within amino-acid biosynthesis; L-arginine biosynthesis; N(2)-acetyl-L-ornithine from L-glutamate: step 1/4. Its function is as follows. Catalyzes two activities which are involved in the cyclic version of arginine biosynthesis: the synthesis of acetylglutamate from glutamate and acetyl-CoA, and of ornithine by transacetylation between acetylornithine and glutamate. This chain is Arginine biosynthesis bifunctional protein ArgJ, mitochondrial, found in Aspergillus oryzae (strain ATCC 42149 / RIB 40) (Yellow koji mold).